A 283-amino-acid chain; its full sequence is Elongation factor Ts (283 aa).

Residues 80–83 form an involved in Mg(2+) ion dislocation from EF-Tu region; sequence TDFV.

Belongs to the EF-Ts family.

It localises to the cytoplasm. In terms of biological role, associates with the EF-Tu.GDP complex and induces the exchange of GDP to GTP. It remains bound to the aminoacyl-tRNA.EF-Tu.GTP complex up to the GTP hydrolysis stage on the ribosome. This is Elongation factor Ts from Pectobacterium carotovorum subsp. carotovorum (strain PC1).